The sequence spans 130 residues: Annexin A1 (130 aa).

Gln-19 is covalently cross-linked (Isoglutamyl lysine isopeptide (Gln-Lys) (interchain with K-?)). Phosphoserine; by PKC is present on Ser-24. Annexin repeat units lie at residues 37-108 (FDPS…ALLK) and 109-130 (TPAQ…TDRR). Ca(2+)-binding residues include Gly-54, Val-55, Glu-57, Lys-92, Leu-95, Glu-100, Met-122, Gly-124, Gly-126, Thr-127, and Arg-130.

The protein belongs to the annexin family.

The protein localises to the nucleus. Its subcellular location is the cytoplasm. It is found in the cell projection. The protein resides in the cilium. It localises to the basolateral cell membrane. The protein localises to the lateral cell membrane. Its subcellular location is the cell membrane. It is found in the apical cell membrane. The protein resides in the membrane. It localises to the early endosome. The protein localises to the cytoplasmic vesicle membrane. Its subcellular location is the endosome membrane. It is found in the secreted. The protein resides in the extracellular space. It localises to the extracellular exosome. The protein localises to the cytoplasmic vesicle. Its subcellular location is the secretory vesicle lumen. It is found in the phagocytic cup. Functionally, plays important roles in the innate immune response as effector of glucocorticoid-mediated responses and regulator of the inflammatory process. Has anti-inflammatory activity. Plays a role in glucocorticoid-mediated down-regulation of the early phase of the inflammatory response. Promotes resolution of inflammation and wound healing. Functions at least in part by activating the formyl peptide receptors and downstream signaling cascades. Promotes chemotaxis of granulocytes and monocytes via activation of the formyl peptide receptors. Contributes to the adaptive immune response by enhancing signaling cascades that are triggered by T-cell activation, regulates differentiation and proliferation of activated T-cells. Promotes the differentiation of T-cells into Th1 cells and negatively regulates differentiation into Th2 cells. Has no effect on unstimulated T-cells. Promotes rearrangement of the actin cytoskeleton, cell polarization and cell migration. Negatively regulates hormone exocytosis via activation of the formyl peptide receptors and reorganization of the actin cytoskeleton. Has high affinity for Ca(2+) and can bind up to eight Ca(2+) ions. Displays Ca(2+)-dependent binding to phospholipid membranes. Plays a role in the formation of phagocytic cups and phagosomes. Plays a role in phagocytosis by mediating the Ca(2+)-dependent interaction between phagosomes and the actin cytoskeleton. This chain is Annexin A1 (ANXA1), found in Gallus gallus (Chicken).